A 299-amino-acid polypeptide reads, in one-letter code: Putative ankyrin repeat protein R864 (299 aa).

7 ANK repeats span residues 78–107, 108–137, 139–167, 168–197, 199–227, 228–257, and 258–287; these read SLNK…NIES, NNNY…NIKS, NNRV…DIRS, NDDY…DIRS, YYYI…DIRA, YNNC…DIRN, and DNDY…DIKT.

In Acanthamoeba polyphaga mimivirus (APMV), this protein is Putative ankyrin repeat protein R864.